We begin with the raw amino-acid sequence, 832 residues long: Putative pentatricopeptide repeat-containing protein At5g08310, mitochondrial (832 aa).

The N-terminal 27 residues, 1-27, are a transit peptide targeting the mitochondrion; it reads MAFSRIALLCQRFSRQQQQRQLLHRPL. 19 PPR repeats span residues 105–139, 140–174, 176–212, 213–247, 252–281, 282–316, 317–351, 352–383, 385–415, 438–472, 473–507, 508–542, 543–577, 578–612, 613–647, 648–682, 683–717, 718–752, and 753–787; these read DMYA…RCFM, SPGA…GLCV, NAYT…GFHF, DKFT…GWLD, TILV…DIRL, NYKT…GMNA, DIAL…GIPP, DRGI…IDKK, VMLL…LMGN, DSDS…GLIP, GPMM…GVEP, SQFT…GFEP, WIKH…GFLG, HMVA…GHCP, DVIA…GLKP, TVAT…EKNP, DVIT…DCYP, NRIT…EMEP, and DSAV…GRFP.

Belongs to the PPR family. P subfamily.

The protein localises to the mitochondrion. The protein is Putative pentatricopeptide repeat-containing protein At5g08310, mitochondrial of Arabidopsis thaliana (Mouse-ear cress).